Consider the following 301-residue polypeptide: MSRQNAGPGFGPGIVVVDKPGAMTSHDVVGRCRRIFGTRRLGHAGTLDPMATGVLVIGIERATKILGLLIATSKSYAATIRLGQTTSTEDAEGEPLASVSAEHVAPEAIAAAILDLTGDIRQVPSAVSAIKVDGRRAYQLAREGQTVELAARPVRIDRFELMDLRRGADVIDIDVEVDCSSGTYIRALARDLGAALDVGGHLTSLRRTRVSHFDLSQAASLDELAERPALSLTLDQACLLMFPRRDLTVDESQSVGNGRPLEPAGIDGIYAASDADGRVIALLRDEGRRTKSVVVIRPATM.

D48 (nucleophile) is an active-site residue.

The protein belongs to the pseudouridine synthase TruB family. Type 1 subfamily.

The enzyme catalyses uridine(55) in tRNA = pseudouridine(55) in tRNA. Its function is as follows. Responsible for synthesis of pseudouridine from uracil-55 in the psi GC loop of transfer RNAs. The sequence is that of tRNA pseudouridine synthase B from Mycobacterium ulcerans (strain Agy99).